The following is a 293-amino-acid chain: MAAITASMVAELRAKTDAPMMECKKALTEADGDLAKAEELLRVKLGNKASKAASRVTAEGVVASFVGGNAGSLVELNCETDFVAKNDDFLAFSKTVAELVATQNPADVAALSALPLEGSTVDAVRLALVGKIGENVSIRRFVRFETANKIATYLHGARIGVIVEYTGAEEQVGKDVAMHIAAMKPVALSSADVPAELIDTERRVAEQKAAESGKPAEIVAKMVDGSVQKYLKEVSLLNQTFVKNDKQTIEQMLKAANAAVQKFALFVVGEGIEKRQDDFAAEVAAQVAAAKQQ.

The interval 80 to 83 (TDFV) is involved in Mg(2+) ion dislocation from EF-Tu.

Belongs to the EF-Ts family.

The protein localises to the cytoplasm. Functionally, associates with the EF-Tu.GDP complex and induces the exchange of GDP to GTP. It remains bound to the aminoacyl-tRNA.EF-Tu.GTP complex up to the GTP hydrolysis stage on the ribosome. The polypeptide is Elongation factor Ts (Burkholderia lata (strain ATCC 17760 / DSM 23089 / LMG 22485 / NCIMB 9086 / R18194 / 383)).